A 277-amino-acid chain; its full sequence is Anamorsin homolog (277 aa).

The interval 1 to 160 (MDTKRMLQNS…NIGSSFALKK (160 aa)) is N-terminal SAM-like domain. Residues 161–188 (SIKSPVKVQNDDYSDLIDEDSLLTEEDL) form a linker region. Residues C199, C208, C211, and C213 each contribute to the [2Fe-2S] cluster site. The interval 199–213 (CEVGSTRKACKNCTC) is fe-S binding site A. The [4Fe-4S] cluster site is built by C238, C241, C249, and C252. Short sequence motifs (cx2C motif) lie at residues 238–241 (CGSC) and 249–252 (CGTC). The tract at residues 238–252 (CGSCGLGDAFRCGTC) is fe-S binding site B.

The protein belongs to the anamorsin family. In terms of assembly, monomer. [2Fe-2S] cluster is required as a cofactor. The cofactor is [4Fe-4S] cluster.

Its subcellular location is the cytoplasm. It localises to the mitochondrion intermembrane space. Component of the cytosolic iron-sulfur (Fe-S) protein assembly (CIA) machinery. Required for the maturation of extramitochondrial Fe-S proteins. Part of an electron transfer chain functioning in an early step of cytosolic Fe-S biogenesis, facilitating the de novo assembly of a [4Fe-4S] cluster on the cytosolic Fe-S scaffold complex. Electrons are transferred from NADPH via a FAD- and FMN-containing diflavin oxidoreductase. Together with the diflavin oxidoreductase, also required for the assembly of the diferric tyrosyl radical cofactor of ribonucleotide reductase (RNR), probably by providing electrons for reduction during radical cofactor maturation in the catalytic small subunit. This is Anamorsin homolog from Populus trichocarpa (Western balsam poplar).